The chain runs to 151 residues: Transcriptional repressor NrdR (151 aa).

A zinc finger spans residues 3-34 (CPFCGYSESKVVDSRSTEDNMAIRRRRECLEC). The 91-residue stretch at 49–139 (ILVIKKDSSR…VYRQFKDINT (91 aa)) folds into the ATP-cone domain.

It belongs to the NrdR family. Zn(2+) serves as cofactor.

Its function is as follows. Negatively regulates transcription of bacterial ribonucleotide reductase nrd genes and operons by binding to NrdR-boxes. This chain is Transcriptional repressor NrdR, found in Clostridium acetobutylicum (strain ATCC 824 / DSM 792 / JCM 1419 / IAM 19013 / LMG 5710 / NBRC 13948 / NRRL B-527 / VKM B-1787 / 2291 / W).